We begin with the raw amino-acid sequence, 589 residues long: Guanylate-binding protein 1 (589 aa).

A GTPase domain (Globular) region spans residues 1–309; it reads MASEIHMSEP…SAICSGELPC (309 aa). Residues 35–276 form the GB1/RHD3-type G domain; sequence TQPVVVVAIV…FTSYIFSYSG (242 aa). GTP contacts are provided by residues 47 to 53, 67 to 69, and 97 to 101; these read YRTGKSY, LGS, and DTEGL. The residue at position 156 (S156) is a Phosphoserine. C586 is modified (cysteine methyl ester). A lipid anchor (S-farnesyl cysteine) is attached at C586. The S-geranylgeranyl cysteine; partial moiety is linked to residue C586. A Phosphothreonine modification is found at T587. Positions 587–589 are cleaved as a propeptide — removed in mature form; that stretch reads TIL.

This sequence belongs to the TRAFAC class dynamin-like GTPase superfamily. GB1/RHD3 GTPase family. GB1 subfamily. Homodimer; homodimerization occurs upon GTP-binding and is required for the second hydrolysis step from GDP to GMP. Undergoes conformational changes and oligomerization upon GTP-binding and hydrolysis. Heterodimer with other family members, including GBP2, GBP3, GBP4 and GBP5. Dimerization regulates subcellular location to membranous structures. Interacts with SQSTM1. Interacts (when phosphorylated) with 14-3-3 protein sigma (SFN); leading to GBP1 retention in the cytosol and inactivation. Post-translationally, isoprenylation of mouse GBP1 is incomplete. It persistently exists in the cell as a mixture of C20-modified and (more predominantly) unmodified form. Isoprenylation is required for proper subcellular location. Phosphorylated at Ser-156 by PIM1 in absence of infection, inhibits GBP1: phosphorylation promotes interaction with 14-3-3 protein sigma (SFN), leading to GBP1 retention in the cytosol. Dephosphorylated in response to infection, liberating GBP1.

It is found in the cytoplasmic vesicle membrane. The protein resides in the golgi apparatus membrane. The protein localises to the cell membrane. Its subcellular location is the cytoplasm. It localises to the cytosol. It is found in the secreted. The enzyme catalyses GTP + H2O = GDP + phosphate + H(+). The catalysed reaction is GDP + H2O = GMP + phosphate + H(+). Interferon (IFN)-inducible GTPase that plays important roles in innate immunity against a diverse range of bacterial, viral and protozoan pathogens. Hydrolyzes GTP to GMP in two consecutive cleavage reactions: GTP is first hydrolyzed to GDP and then to GMP in a processive manner. Following infection, recruited to the pathogen-containing vacuoles or vacuole-escaped bacteria and promotes both inflammasome assembly and autophagy. Acts as a positive regulator of inflammasome assembly by facilitating the detection of inflammasome ligands from pathogens. Involved in the lysis of pathogen-containing vacuoles, releasing pathogens into the cytosol. Following pathogen release in the cytosol, forms a protein coat in a GTPase-dependent manner that encapsulates pathogens and promotes the detection of ligands by pattern recognition receptors. Plays a key role in inflammasome assembly in response to infection by Gram-negative bacteria: following pathogen release in the cytosol, forms a protein coat that encapsulates Gram-negative bacteria and directly binds to lipopolysaccharide (LPS), disrupting the O-antigen barrier and unmasking lipid A that is that detected by the non-canonical inflammasome effector CASP4/CASP11. Also promotes recruitment of proteins that mediate bacterial cytolysis, leading to release double-stranded DNA (dsDNA) that activates the AIM2 inflammasome. Involved in autophagy by regulating bacteriolytic peptide generation via its interaction with ubiquitin-binding protein SQSTM1, which delivers monoubiquitinated proteins to autolysosomes for the generation of bacteriolytic peptides. Confers protection to several pathogens, including the bacterial pathogens L.monocytogenes and M.bovis BCG as well as the protozoan pathogen T.gondii. Exhibits antiviral activity against influenza virus. The chain is Guanylate-binding protein 1 (Gbp1) from Mus musculus (Mouse).